Reading from the N-terminus, the 321-residue chain is Basic peroxidase (321 aa).

Residues 1–30 form the signal peptide; it reads MSYHKSSGTILMVPLFMLLISVNYFMSCNA. Gln-31 is modified (pyrrolidone carboxylic acid). 4 disulfide bridges follow: Cys-41–Cys-117, Cys-74–Cys-79, Cys-123–Cys-317, and Cys-202–Cys-228. The active-site Proton acceptor is His-72. Residues Asp-73, Val-76, Gly-78, Asp-80, and Ser-82 each coordinate Ca(2+). Substrate is bound at residue Pro-165. His-195 serves as a coordination point for heme b. Residue Thr-196 participates in Ca(2+) binding. Residues Asn-211 and Asn-221 are each glycosylated (N-linked (GlcNAc...) asparagine). Positions 241, 244, and 249 each coordinate Ca(2+).

This sequence belongs to the peroxidase family. Classical plant (class III) peroxidase subfamily. It depends on heme b as a cofactor. The cofactor is Ca(2+). In terms of processing, N-glycosylated. As to expression, expressed in tracheary elements, roots, young and old hypocotyls, and stems in the partially glycosylated form and in roots and young hypocotyls in the fully glycosylated form. None of the isoforms is significantly expressed in leaves or cotyledons.

Its subcellular location is the secreted. It catalyses the reaction 2 a phenolic donor + H2O2 = 2 a phenolic radical donor + 2 H2O. In terms of biological role, removal of H(2)O(2), oxidation of toxic reductants, biosynthesis and degradation of lignin, suberization, auxin catabolism, response to environmental stresses such as wounding, pathogen attack and oxidative stress. These functions might be dependent on each isozyme/isoform in each plant tissue. Involved in the synthesis of highly polymerized lignins. This Zinnia elegans (Garden zinnia) protein is Basic peroxidase (POD1).